The following is a 99-amino-acid chain: Large ribosomal subunit protein bL21 (99 aa).

This sequence belongs to the bacterial ribosomal protein bL21 family. In terms of assembly, part of the 50S ribosomal subunit. Contacts protein L20.

In terms of biological role, this protein binds to 23S rRNA in the presence of protein L20. This chain is Large ribosomal subunit protein bL21, found in Mycoplasma mobile (strain ATCC 43663 / 163K / NCTC 11711) (Mesomycoplasma mobile).